The sequence spans 344 residues: Tetraacyldisaccharide 4'-kinase (344 aa).

Residue 65–72 coordinates ATP; the sequence is HAGGTGKT.

The protein belongs to the LpxK family.

The enzyme catalyses a lipid A disaccharide + ATP = a lipid IVA + ADP + H(+). It participates in glycolipid biosynthesis; lipid IV(A) biosynthesis; lipid IV(A) from (3R)-3-hydroxytetradecanoyl-[acyl-carrier-protein] and UDP-N-acetyl-alpha-D-glucosamine: step 6/6. Its function is as follows. Transfers the gamma-phosphate of ATP to the 4'-position of a tetraacyldisaccharide 1-phosphate intermediate (termed DS-1-P) to form tetraacyldisaccharide 1,4'-bis-phosphate (lipid IVA). This chain is Tetraacyldisaccharide 4'-kinase, found in Neisseria meningitidis serogroup C / serotype 2a (strain ATCC 700532 / DSM 15464 / FAM18).